The chain runs to 1080 residues: Serine/threonine-protein kinase KIC1 (1080 aa).

The region spanning 23–276 (FKRTEVIGRG…ADDLLKSKFI (254 aa)) is the Protein kinase domain. Residues 29–37 (IGRGKFGVV) and Lys52 contribute to the ATP site. The active-site Proton acceptor is Asp144. 4 disordered regions span residues 308–347 (EGSIPENEPSKPSEAPKPSQNGGGDEAQKSIASNDNEIKR), 615–760 (KARS…LAPP), 787–831 (STLN…LQMP), and 901–956 (SQSI…NTGN). Positions 312 to 326 (PENEPSKPSEAPKPS) are enriched in low complexity. Polar residues predominate over residues 615–626 (KARSSTVTAGTP). Over residues 627–638 (SSSSSIQYKSPS) the composition is skewed to low complexity. Positions 656–673 (STITNQKLGSAVASNSGI) are enriched in polar residues. Low complexity predominate over residues 674 to 689 (SSTPNNSNNYNNNTDS). Over residues 693 to 726 (RGSSGSNTANSTQMGITNPGNVTKLSTHKASSPS) the composition is skewed to polar residues. Ser735 bears the Phosphoserine mark. Residues 743 to 756 (SPTQNIGHNSTHTN) show a composition bias toward polar residues. Residues 787 to 807 (STLNTISGNSSNNLTSSNYFS) are compositionally biased toward low complexity. Basic and acidic residues predominate over residues 808-821 (NEKEGSRVNGDFKR). Residues 901–913 (SQSISNRKNSSAS) are compositionally biased toward polar residues. The segment covering 918 to 956 (NILGSSVSGNVSGIGNNNVGSNNNSGPNNSVPLSANTGN) has biased composition (low complexity).

It belongs to the protein kinase superfamily. Ser/Thr protein kinase family. Interacts with CDC31.

The catalysed reaction is L-seryl-[protein] + ATP = O-phospho-L-seryl-[protein] + ADP + H(+). It catalyses the reaction L-threonyl-[protein] + ATP = O-phospho-L-threonyl-[protein] + ADP + H(+). Protein kinase involved in morphogenesis and cell integrity. This is Serine/threonine-protein kinase KIC1 (KIC1) from Saccharomyces cerevisiae (strain ATCC 204508 / S288c) (Baker's yeast).